Reading from the N-terminus, the 476-residue chain is Ribulose bisphosphate carboxylase large chain (476 aa).

The propeptide occupies 1-2 (MS). N-acetylproline is present on P3. The residue at position 14 (K14) is an N6,N6,N6-trimethyllysine. The substrate site is built by N123 and T173. The active-site Proton acceptor is the K175. K177 is a substrate binding site. The Mg(2+) site is built by K201, D203, and E204. An N6-carboxylysine modification is found at K201. The Proton acceptor role is filled by H294. The substrate site is built by R295, H327, and S379.

It belongs to the RuBisCO large chain family. Type I subfamily. Heterohexadecamer of 8 large chains and 8 small chains; disulfide-linked. The disulfide link is formed within the large subunit homodimers. Requires Mg(2+) as cofactor. Post-translationally, the disulfide bond which can form in the large chain dimeric partners within the hexadecamer appears to be associated with oxidative stress and protein turnover.

Its subcellular location is the plastid. The protein resides in the chloroplast. The enzyme catalyses 2 (2R)-3-phosphoglycerate + 2 H(+) = D-ribulose 1,5-bisphosphate + CO2 + H2O. It carries out the reaction D-ribulose 1,5-bisphosphate + O2 = 2-phosphoglycolate + (2R)-3-phosphoglycerate + 2 H(+). In terms of biological role, ruBisCO catalyzes two reactions: the carboxylation of D-ribulose 1,5-bisphosphate, the primary event in carbon dioxide fixation, as well as the oxidative fragmentation of the pentose substrate in the photorespiration process. Both reactions occur simultaneously and in competition at the same active site. In Arenaria drummondii (Drummond sandwort), this protein is Ribulose bisphosphate carboxylase large chain.